Here is a 555-residue protein sequence, read N- to C-terminus: Glutamate--tRNA ligase (555 aa).

Residues 100 to 110 carry the 'HIGH' region motif; sequence PNPSGPLHIGH.

It belongs to the class-I aminoacyl-tRNA synthetase family. Glutamate--tRNA ligase type 2 subfamily.

The protein localises to the cytoplasm. It catalyses the reaction tRNA(Glu) + L-glutamate + ATP = L-glutamyl-tRNA(Glu) + AMP + diphosphate. Catalyzes the attachment of glutamate to tRNA(Glu) in a two-step reaction: glutamate is first activated by ATP to form Glu-AMP and then transferred to the acceptor end of tRNA(Glu). The polypeptide is Glutamate--tRNA ligase (Methanococcus maripaludis (strain C6 / ATCC BAA-1332)).